The sequence spans 786 residues: MMGTKHRNSHVNGSIKSSSSLRSSSKSFQAKMDLMSERLYDVVKSGSMVKRAQNKKRFTPVNYKHRWFELTKRTFSYFDVENVERRRERGRIHLKGVRLVEEATVSGEGGDPFAPDGYPFQVGYCEISASANSHQLENGNGGGSGVGIEGQQSGRAVPQYTLYVIANSEKERSEWIRAIRQVCEDSNTPKSYRYHPGLWSGKKWSCCKGLSRTTFGCRAAAHWREANNNPSNGSSPAQNSTRSISPNSSTTNSQFSLQHNSSGSLGGGVGGGLGGGGSLGLGGGGGGGGSCTPTSLQPQSSLTTFKQSPTLLNGNGTLLDANMPGGIPTPGTPNSKAKDNSHFVKLVVALYPFKAIEGGDLSLEKNAEYEVIDDSQEHWWKVKDALGNVGYIPSNYVKPKALLGLERYEWYVGDMSRQRAESLLKQGDKEGCFVVRKSSTKGLYTLSLHTKVPQSHVKHYHIKQNARCEYYLSEKHCCETIPDLINYHRHNSGGLACRLKSSPCDRPVPPTAGLSHDKWEIHPMELMLMEELGSGQFGVVRRGKWRGSIDTAVKMMKEGTMSEDDFIEEAKVMTKLQHPNLVQLYGVCSKHRPIYIVTEYMKHGSLLNYLRRHEKTLIGNMGLLLDMCIQVSKGMTYLERHNYIHRDLAARNCLVGSENVVKVADFGLARYVLDDQYTSSGGTKFPIKWAPPEVLNYTRFSSKSDVWAYGVLMWEIFTCGKMPYGRLKNTEVVERVQRGIILEKPKSCAKEIYDVMKLCWSHGPEERPAFRVLMDQLALVAQTLTD.

The segment at 1 to 23 (MMGTKHRNSHVNGSIKSSSSLRS) is disordered. The span at 14–23 (SIKSSSSLRS) shows a compositional bias: low complexity. A PH domain is found at 41–184 (DVVKSGSMVK…WIRAIRQVCE (144 aa)). Residues 187 to 223 (NTPKSYRYHPGLWSGKKWSCCKGLSRTTFGCRAAAHW) form a Btk-type zinc finger. Zn(2+) contacts are provided by His195, Cys206, Cys207, and Cys217. A compositionally biased stretch (low complexity) spans 226–240 (ANNNPSNGSSPAQNS). The disordered stretch occupies residues 226 to 301 (ANNNPSNGSS…TPTSLQPQSS (76 aa)). Over residues 241–260 (TRSISPNSSTTNSQFSLQHN) the composition is skewed to polar residues. A compositionally biased stretch (gly residues) spans 264 to 290 (SLGGGVGGGLGGGGSLGLGGGGGGGGS). Over residues 291–301 (CTPTSLQPQSS) the composition is skewed to polar residues. Positions 342–402 (HFVKLVVALY…PSNYVKPKAL (61 aa)) constitute an SH3 domain. The 94-residue stretch at 410-503 (WYVGDMSRQR…GLACRLKSSP (94 aa)) folds into the SH2 domain. One can recognise a Protein kinase domain in the interval 526 to 779 (LMLMEELGSG…FRVLMDQLAL (254 aa)). Residues 532-540 (LGSGQFGVV) and Lys554 each bind ATP. Catalysis depends on Asp647, which acts as the Proton acceptor. Tyr677 bears the Phosphotyrosine; by autocatalysis mark.

The protein belongs to the protein kinase superfamily. Tyr protein kinase family. TEC subfamily. Zn(2+) serves as cofactor. Ring canals in the egg chambers and imaginal disks of third-instar larvae.

The catalysed reaction is L-tyrosyl-[protein] + ATP = O-phospho-L-tyrosyl-[protein] + ADP + H(+). Functionally, required for proper ring canal development. Also required for the development of male genitalia and for adult survival. This Drosophila melanogaster (Fruit fly) protein is Tyrosine-protein kinase Btk.